A 130-amino-acid polypeptide reads, in one-letter code: Protein ApaG (130 aa).

Residues 3–127 enclose the ApaG domain; that stretch reads RAVTRNIEVQ…FSLDLPGTRR (125 aa).

This chain is Protein ApaG, found in Mesorhizobium japonicum (strain LMG 29417 / CECT 9101 / MAFF 303099) (Mesorhizobium loti (strain MAFF 303099)).